The following is a 445-amino-acid chain: Protein kinase C and casein kinase substrate in neurons protein 1 (445 aa).

Residues 12-282 enclose the F-BAR domain; that stretch reads DETTDSFWEV…TIVSASAQED (271 aa). Coiled coils occupy residues 146–167 and 183–219; these read AKKL…KEEK and TTDQ…NKCT. The tract at residues 327–390 is disordered; that stretch reads LTQVTHGAEH…PFEEDSKGVR (64 aa). 2 stretches are compositionally biased toward polar residues: residues 338–358 and 368–379; these read TPQT…QYSA and TAAQSASETNGG. In terms of domain architecture, SH3 spans 386 to 445; it reads SKGVRVRALYDYEGQEQDELTFKAGDELTKLEDEDEQGWCKGRLDSGQLGLYPANYVEPV.

Interacts with cobl.

The protein resides in the cytoplasm. Its subcellular location is the cytosol. It is found in the cell membrane. It localises to the cell projection. The protein localises to the synapse. The protein resides in the synaptosome. Its subcellular location is the cytoplasmic vesicle membrane. It is found in the ruffle membrane. It localises to the membrane. Functionally, binds to membranes via its F-BAR domain and mediates membrane tubulation. Plays a role in cellular transport processes by recruiting dynamins to membranes. Plays a role in the reorganization of the actin cytoskeleton and in neuron morphogenesis via its interaction with cobl, and by recruiting cobl to the cell cortex. Plays a role in the regulation of neurite formation, neurite branching and the regulation of neurite length. Required for normal synaptic vesicle endocytosis; this process retrieves previously released neurotransmitters to accommodate multiple cycles of neurotransmission. Required for normal excitatory and inhibitory synaptic transmission. Required for normal embryonic development, including normal development of laterality, normal body size and shape, as well as normal brain and heart development. Required for normal development of stereocilia and kinocilia in sensory hair cells of neuromasts in the posterior lateral line organ, and thus also for balance keeping and normal swimming behavior. The polypeptide is Protein kinase C and casein kinase substrate in neurons protein 1 (pacsin1b) (Danio rerio (Zebrafish)).